The sequence spans 99 residues: Nucleoid-associated protein UUR10_0100 (99 aa).

This sequence belongs to the YbaB/EbfC family. In terms of assembly, homodimer.

It localises to the cytoplasm. It is found in the nucleoid. Its function is as follows. Binds to DNA and alters its conformation. May be involved in regulation of gene expression, nucleoid organization and DNA protection. The chain is Nucleoid-associated protein UUR10_0100 from Ureaplasma urealyticum serovar 10 (strain ATCC 33699 / Western).